The following is a 1689-amino-acid chain: Cullin-7 (1689 aa).

Residues 349-422 form the CPH domain; it reads RASFASFNTY…HWHMLEILGF (74 aa). The 180-residue stretch at 793-972 folds into the DOC domain; sequence PIQIPFFDVF…HTRLFYMVRA (180 aa). Residues 1321-1337 are compositionally biased toward basic and acidic residues; the sequence is VAHEDSGREDKSKKEEA. The disordered stretch occupies residues 1321–1371; it reads VAHEDSGREDKSKKEEAIGEAAAVAMAEEEDQGKKEEGEEEGEGEDEEEER. Acidic residues predominate over residues 1358-1370; it reads GEEEGEGEDEEEE. Lys1567 participates in a covalent cross-link: Glycyl lysine isopeptide (Lys-Gly) (interchain with G-Cter in NEDD8).

This sequence belongs to the cullin family. As to quaternary structure, component of the 3M complex, composed of core components CUL7, CCDC8 and OBSL1. Component of the Cul7-RING(FBXW8) complex consisting of CUL7, RBX1, SKP1 and FBXW8. Within the Cul7-RING(FBXW8) complex interacts with FBXW8 and RBX1, but not with SKP1. Interacts with CUL1 (via the C-terminal domain); the interaction seems to be mediated by FBXW8; it is likely specific to FBXW8, but not other F-box proteins. Interacts (via the CPH domain) with p53/TP53; the interaction preferentially involves tetrameric and dimeric p53/TP53; this interaction recruits p53/TP53 for ubiquitination by neddylated CUL1-RBX1. The CUL7-CUL9 heterodimer seems to interact specifically with p53/TP53. Interacts with FBXW8; interaction is mutually exclusive of binding to CUL9 or p53/TP53. Interacts with CUL9; leading to inhibited CUL9 activity. Interacts with OBSL1. Interacts (as part of the 3M complex) with HDAC4 and HDAC5; it is negatively regulated by ANKRA2.

Its subcellular location is the cytoplasm. The protein localises to the cytoskeleton. It is found in the microtubule organizing center. It localises to the centrosome. The protein resides in the perinuclear region. Its subcellular location is the golgi apparatus. It participates in protein modification; protein ubiquitination. Functionally, core component of the 3M and Cul7-RING(FBXW8) complexes, which mediate the ubiquitination and subsequent proteasomal degradation of target proteins. Core component of the 3M complex, a complex required to regulate microtubule dynamics and genome integrity. It is unclear how the 3M complex regulates microtubules, it could act by controlling the level of a microtubule stabilizer. The Cul7-RING(FBXW8) complex alone lacks ubiquitination activity and does not promote polyubiquitination and proteasomal degradation of p53/TP53. However it mediates recruitment of p53/TP53 for ubiquitination by neddylated CUL1-RBX1. Interaction with CUL9 is required to inhibit CUL9 activity and ubiquitination of BIRC5. The Cul7-RING(FBXW8) complex also mediates ubiquitination and consequent degradation of target proteins such as GORASP1, IRS1 and MAP4K1/HPK1. Ubiquitination of GORASP1 regulates Golgi morphogenesis and dendrite patterning in brain. Mediates ubiquitination and degradation of IRS1 in a mTOR-dependent manner: the Cul7-RING(FBXW8) complex recognizes and binds IRS1 previously phosphorylated by S6 kinase (RPS6KB1 or RPS6KB2). The Cul7-RING(FBXW8) complex also mediates ubiquitination of MAP4K1/HPK1: recognizes and binds autophosphorylated MAP4K1/HPK1, leading to its degradation, thereby affecting cell proliferation and differentiation. Acts as a regulator in trophoblast cell epithelial-mesenchymal transition and placental development. While the Cul7-RING(FBXW8) and the 3M complexes are associated and involved in common processes, CUL7 and the Cul7-RING(FBXW8) complex may have additional functions. Probably plays a role in the degradation of proteins involved in endothelial proliferation and/or differentiation. The polypeptide is Cullin-7 (Cul7) (Mus musculus (Mouse)).